We begin with the raw amino-acid sequence, 500 residues long: Lysine--tRNA ligase (500 aa).

The Mg(2+) site is built by Glu-410 and Glu-417.

This sequence belongs to the class-II aminoacyl-tRNA synthetase family. Homodimer. It depends on Mg(2+) as a cofactor.

Its subcellular location is the cytoplasm. The catalysed reaction is tRNA(Lys) + L-lysine + ATP = L-lysyl-tRNA(Lys) + AMP + diphosphate. This chain is Lysine--tRNA ligase, found in Pseudomonas fluorescens (strain ATCC BAA-477 / NRRL B-23932 / Pf-5).